The sequence spans 336 residues: Heme A synthase (336 aa).

8 helical membrane-spanning segments follow: residues 12–32, 97–117, 130–150, 161–181, 194–214, 256–276, 285–305, and 310–330; these read LKLW…VGGL, LLAR…TLYF, IFFL…SGLI, SIHL…ILDI, LFLL…AFLS, FLHR…NFIY, YVLF…ITLI, and ITYA…YFLI. His258 is a heme binding site. His316 contacts heme.

Belongs to the COX15/CtaA family. Type 2 subfamily. As to quaternary structure, interacts with CtaB. Heme b is required as a cofactor.

The protein localises to the cell membrane. It catalyses the reaction Fe(II)-heme o + 2 A + H2O = Fe(II)-heme a + 2 AH2. It participates in porphyrin-containing compound metabolism; heme A biosynthesis; heme A from heme O: step 1/1. In terms of biological role, catalyzes the conversion of heme O to heme A by two successive hydroxylations of the methyl group at C8. The first hydroxylation forms heme I, the second hydroxylation results in an unstable dihydroxymethyl group, which spontaneously dehydrates, resulting in the formyl group of heme A. The polypeptide is Heme A synthase (Pelagibacter ubique (strain HTCC1062)).